A 223-amino-acid polypeptide reads, in one-letter code: Golgi to ER traffic protein 1 (223 aa).

Position 1 (Met-1) is a topological domain, lumenal. Residues 2-21 (SWVVAIAVVFVVVLKVLEYS) form a helical membrane-spanning segment. At 22-105 (TSYHDLVLQS…QIKGHLKKVK (84 aa)) the chain is on the cytoplasmic side. Residues 56-105 (ENKSISAQDNYAKWTKNNRKLDKLDKEITELGAQLKAHNEQIKGHLKKVK) are a coiled coil. Residues 106 to 126 (LLLLTVPFLCFKLWKGKHIVY) traverse the membrane as a helical segment. Over 127–177 (NLPHHQMFPQLVAGVWSQGWLYLAILPLQLAKSIVTGSSFAIETASFPHMG) the chain is Lumenal. A helical membrane pass occupies residues 178–194 (VSLGIWLWALNSVISNI). Topologically, residues 195 to 223 (EFMTMQLWAKPVSKPSKKLEIVTDEIKVD) are cytoplasmic.

The protein belongs to the WRB/GET1 family. As to quaternary structure, component of the Golgi to ER traffic (GET) complex, which is composed of GET1, GET2 and GET3. Within the complex, GET1 and GET2 form a heterotetramer which is stabilized by phosphatidylinositol binding and which binds to the GET3 homodimer.

It localises to the endoplasmic reticulum membrane. Its subcellular location is the golgi apparatus membrane. In terms of biological role, required for the post-translational delivery of tail-anchored (TA) proteins to the endoplasmic reticulum. Together with GET2, acts as a membrane receptor for soluble GET3, which recognizes and selectively binds the transmembrane domain of TA proteins in the cytosol. The GET complex cooperates with the HDEL receptor ERD2 to mediate the ATP-dependent retrieval of resident ER proteins that contain a C-terminal H-D-E-L retention signal from the Golgi to the ER. This is Golgi to ER traffic protein 1 from Candida glabrata (strain ATCC 2001 / BCRC 20586 / JCM 3761 / NBRC 0622 / NRRL Y-65 / CBS 138) (Yeast).